Consider the following 267-residue polypeptide: 2-keto-3-deoxy-L-rhamnonate aldolase (267 aa).

The Proton acceptor role is filled by H49. Q151 contacts substrate. E153 provides a ligand contact to Mg(2+). The substrate site is built by A178 and D179. Residue D179 coordinates Mg(2+).

Belongs to the HpcH/HpaI aldolase family. KDR aldolase subfamily. In terms of assembly, homohexamer. Mg(2+) is required as a cofactor.

It catalyses the reaction 2-dehydro-3-deoxy-L-rhamnonate = (S)-lactaldehyde + pyruvate. In terms of biological role, catalyzes the reversible retro-aldol cleavage of 2-keto-3-deoxy-L-rhamnonate (KDR) to pyruvate and lactaldehyde. The protein is 2-keto-3-deoxy-L-rhamnonate aldolase of Shigella dysenteriae serotype 1 (strain Sd197).